The primary structure comprises 351 residues: Putative ABC transporter permease protein MJ0876 (351 aa).

9 helical membrane-spanning segments follow: residues 4-24 (VGIL…ALYL), 59-79 (LPPI…GLML), 99-119 (VLMV…FEIF), 124-144 (ILVA…IIAL), 152-172 (VIIV…YLIA), 196-216 (GDVI…MFLI), 249-269 (FITG…IIAP), 284-304 (LVPA…ILSL), and 322-342 (PLPI…YLVY).

Belongs to the binding-protein-dependent transport system permease family. FecCD subfamily.

Its subcellular location is the cell membrane. Its function is as follows. Probably part of a binding-protein-dependent transport system. Probably responsible for the translocation of the substrate across the membrane. The sequence is that of Putative ABC transporter permease protein MJ0876 from Methanocaldococcus jannaschii (strain ATCC 43067 / DSM 2661 / JAL-1 / JCM 10045 / NBRC 100440) (Methanococcus jannaschii).